A 265-amino-acid polypeptide reads, in one-letter code: Methylthioribulose-1-phosphate dehydratase (265 aa).

Substrate is bound at residue Cys116. Residues His134 and His136 each coordinate Zn(2+). Glu159 functions as the Proton donor/acceptor in the catalytic mechanism. His224 serves as a coordination point for Zn(2+).

Belongs to the aldolase class II family. MtnB subfamily. Zn(2+) serves as cofactor.

It localises to the cytoplasm. It catalyses the reaction 5-(methylsulfanyl)-D-ribulose 1-phosphate = 5-methylsulfanyl-2,3-dioxopentyl phosphate + H2O. Its pathway is amino-acid biosynthesis; L-methionine biosynthesis via salvage pathway; L-methionine from S-methyl-5-thio-alpha-D-ribose 1-phosphate: step 2/6. In terms of biological role, catalyzes the dehydration of methylthioribulose-1-phosphate (MTRu-1-P) into 2,3-diketo-5-methylthiopentyl-1-phosphate (DK-MTP-1-P). The polypeptide is Methylthioribulose-1-phosphate dehydratase (Debaryomyces hansenii (strain ATCC 36239 / CBS 767 / BCRC 21394 / JCM 1990 / NBRC 0083 / IGC 2968) (Yeast)).